The sequence spans 163 residues: Endoribonuclease YbeY (163 aa).

Residues histidine 123, histidine 127, and histidine 133 each contribute to the Zn(2+) site.

The protein belongs to the endoribonuclease YbeY family. Zn(2+) serves as cofactor.

The protein localises to the cytoplasm. Functionally, single strand-specific metallo-endoribonuclease involved in late-stage 70S ribosome quality control and in maturation of the 3' terminus of the 16S rRNA. The chain is Endoribonuclease YbeY from Helicobacter hepaticus (strain ATCC 51449 / 3B1).